Consider the following 552-residue polypeptide: ATP synthase subunit alpha (552 aa).

ATP is bound at residue 173 to 180 (GDRQTGKT). A disordered region spans residues 516-552 (DGKPLVNEPAPSPLDPGLVRQESIPVHRPAARKDDEG).

The protein belongs to the ATPase alpha/beta chains family. As to quaternary structure, F-type ATPases have 2 components, CF(1) - the catalytic core - and CF(0) - the membrane proton channel. CF(1) has five subunits: alpha(3), beta(3), gamma(1), delta(1), epsilon(1). CF(0) has three main subunits: a(1), b(2) and c(9-12). The alpha and beta chains form an alternating ring which encloses part of the gamma chain. CF(1) is attached to CF(0) by a central stalk formed by the gamma and epsilon chains, while a peripheral stalk is formed by the delta and b chains.

It is found in the cell membrane. The enzyme catalyses ATP + H2O + 4 H(+)(in) = ADP + phosphate + 5 H(+)(out). Functionally, produces ATP from ADP in the presence of a proton gradient across the membrane. The alpha chain is a regulatory subunit. The sequence is that of ATP synthase subunit alpha from Frankia casuarinae (strain DSM 45818 / CECT 9043 / HFP020203 / CcI3).